The following is a 333-amino-acid chain: Glyceraldehyde-3-phosphate dehydrogenase (333 aa).

The residue at position 1 (Ser-1) is an N-acetylserine. NAD(+)-binding positions include 10 to 11 (RI), Asp-31, and Ser-118. D-glyceraldehyde 3-phosphate contacts are provided by residues 147–149 (SCT), Thr-178, 207–208 (TG), and Arg-230. Residue Cys-148 is the Nucleophile of the active site. Residue Asn-312 participates in NAD(+) binding.

This sequence belongs to the glyceraldehyde-3-phosphate dehydrogenase family. In terms of assembly, homotetramer.

It is found in the cytoplasm. The enzyme catalyses D-glyceraldehyde 3-phosphate + phosphate + NAD(+) = (2R)-3-phospho-glyceroyl phosphate + NADH + H(+). Its pathway is carbohydrate degradation; glycolysis; pyruvate from D-glyceraldehyde 3-phosphate: step 1/5. This Homarus americanus (American lobster) protein is Glyceraldehyde-3-phosphate dehydrogenase.